The primary structure comprises 410 residues: Exopolygalacturonase (410 aa).

A signal peptide spans 1–22 (MACIDNAMRALFLLALFCVVHG). 2 N-linked (GlcNAc...) asparagine glycosylation sites follow: N89 and N201. 5 PbH1 repeats span residues 192 to 218 (CKDM…HMGD), 219 to 240 (SSGV…SIGP), 242 to 262 (TSKV…SIGS), 272 to 293 (VTDI…RIKA), and 337 to 377 (ASKV…TMDD). D233 serves as the catalytic Proton donor. C235 and C252 form a disulfide bridge. Residue N246 is glycosylated (N-linked (GlcNAc...) asparagine). H256 is a catalytic residue. The N-linked (GlcNAc...) asparagine glycan is linked to N349. A disulfide bridge links C364 with C370. N387 is a glycosylation site (N-linked (GlcNAc...) asparagine). A disulfide bond links C393 and C409.

Belongs to the glycosyl hydrolase 28 family. As to expression, pollen.

It localises to the secreted. The protein resides in the cell wall. The enzyme catalyses [(1-&gt;4)-alpha-D-galacturonosyl](n) + H2O = alpha-D-galacturonate + [(1-&gt;4)-alpha-D-galacturonosyl](n-1). In terms of biological role, may function in depolymerizing pectin during pollen development, germination, and tube growth. Acts as an exo-polygalacturonase. The protein is Exopolygalacturonase (PG2C) of Zea mays (Maize).